A 145-amino-acid chain; its full sequence is Putative pre-16S rRNA nuclease (145 aa).

It belongs to the YqgF nuclease family.

It localises to the cytoplasm. Could be a nuclease involved in processing of the 5'-end of pre-16S rRNA. The chain is Putative pre-16S rRNA nuclease from Pseudomonas fluorescens (strain Pf0-1).